Reading from the N-terminus, the 310-residue chain is Nucleotide-binding protein MAP_1147 (310 aa).

Position 30 to 37 (30 to 37) interacts with ATP; the sequence is GLSGAGRG. 81–84 lines the GTP pocket; that stretch reads DVRS.

This sequence belongs to the RapZ-like family.

Its function is as follows. Displays ATPase and GTPase activities. The polypeptide is Nucleotide-binding protein MAP_1147 (Mycolicibacterium paratuberculosis (strain ATCC BAA-968 / K-10) (Mycobacterium paratuberculosis)).